A 154-amino-acid chain; its full sequence is Myoglobin (154 aa).

Residues 2-148 enclose the Globin domain; the sequence is GLSDGEWQLV…FRNDMAAQYK (147 aa). Ser4 is subject to Phosphoserine. Nitrite is bound at residue His65. His65 is a binding site for O2. Thr68 is modified (phosphothreonine). His94 is a binding site for heme b.

In terms of assembly, monomer.

It localises to the cytoplasm. It is found in the sarcoplasm. It catalyses the reaction Fe(III)-heme b-[protein] + nitric oxide + H2O = Fe(II)-heme b-[protein] + nitrite + 2 H(+). It carries out the reaction H2O2 + AH2 = A + 2 H2O. Functionally, monomeric heme protein which primary function is to store oxygen and facilitate its diffusion within muscle tissues. Reversibly binds oxygen through a pentacoordinated heme iron and enables its timely and efficient release as needed during periods of heightened demand. Depending on the oxidative conditions of tissues and cells, and in addition to its ability to bind oxygen, it also has a nitrite reductase activity whereby it regulates the production of bioactive nitric oxide. Under stress conditions, like hypoxia and anoxia, it also protects cells against reactive oxygen species thanks to its pseudoperoxidase activity. The sequence is that of Myoglobin from Rangifer tarandus (Reindeer).